The following is a 526-amino-acid chain: Arp2/3 complex-activating protein rickA (526 aa).

The segment at 305–356 is disordered; the sequence is TTSSIAKPLENNVTPPPPLTKNNIPPPPPPPPLSKNNILPPPPPPMPTMAPA. Pro residues predominate over residues 318-352; that stretch reads TPPPPLTKNNIPPPPPPPPLSKNNILPPPPPPMPT. WH2 domains follow at residues 383 to 400 and 410 to 427; these read DTSDLMREIAGPKNLRKV and SRDLLLQSIRGEHKLRKV. Disordered stretches follow at residues 425–452 and 464–526; these read RKVEFDPNTGKPVAHSHSKPAQNVSKPN and MEMS…FVRS. A central and acidic domains region spans residues 448–484; that stretch reads VSKPNGVASILARRVAMEMSDSSSSSGSESDSGNWSD. Residues 464 to 480 are compositionally biased toward low complexity; sequence MEMSDSSSSSGSESDSG. 2 stretches are compositionally biased toward polar residues: residues 481-491 and 506-526; these read NWSDASVNSNK and TTHAQKILSNRSSQKPSFVRS.

In terms of assembly, homodimer.

The protein localises to the cell surface. In terms of biological role, recruits and activates the Arp2/3 complex, which in turn leads to actin polymerization, promoting Rickettsia motility during infection. The polypeptide is Arp2/3 complex-activating protein rickA (rickA) (Rickettsia felis (strain ATCC VR-1525 / URRWXCal2) (Rickettsia azadi)).